The primary structure comprises 893 residues: POU domain protein 2, isoform B (893 aa).

The disordered stretch occupies residues 586 to 668 (QMKQQQREDP…STPKPTSGLT (83 aa)). A compositionally biased stretch (low complexity) spans 602-617 (PLAKSPLRSPSLSPVP). Residues 623-646 (QQRTPPNSMTANSLGMSSAVMTPN) are compositionally biased toward polar residues. Low complexity predominate over residues 647 to 665 (TPSMQQQPQLQQSTPKPTS). The POU-specific domain maps to 681–755 (EETTDLEELE…LLQKWLEDAD (75 aa)). The segment at residues 786–845 (RRKKRTSIETTVRTTLEKAFLMNCKPTSEEISQLSERLNMDKEVIRVWFCNRRQKEKRIN) is a DNA-binding region (homeobox).

The protein belongs to the POU transcription factor family. Class-2 subfamily. In terms of tissue distribution, initial expression in cellular blastoderm stage, then in ectodermal stripes during germband extension. Broad expression in the neuroectoderm followed by limitation to discrete subsets of CNS cells, and expression in specific PNS neurons and support cells.

It localises to the nucleus. DNA-binding regulatory protein implicated in early development. Involved in neuronal cell fate decision. May act as an octamer-dependent activator of transcription. Could also play an early role in specific ectodermal cells, and a subsequent role in the embryonic nervous system. The sequence is that of POU domain protein 2, isoform B from Drosophila melanogaster (Fruit fly).